Consider the following 327-residue polypeptide: Porphobilinogen deaminase (327 aa).

The residue at position 251 (C251) is an S-(dipyrrolylmethanemethyl)cysteine.

This sequence belongs to the HMBS family. Dipyrromethane is required as a cofactor.

It catalyses the reaction 4 porphobilinogen + H2O = hydroxymethylbilane + 4 NH4(+). Its pathway is porphyrin-containing compound metabolism; protoporphyrin-IX biosynthesis; coproporphyrinogen-III from 5-aminolevulinate: step 2/4. Functionally, catalyzes the tetrapolymerization of the monopyrrole porphobilinogen (PBG) into the hydroxymethylbilane pre-uroporphyrinogen in several discrete steps. This is Porphobilinogen deaminase (HEM3) from Saccharomyces cerevisiae (strain ATCC 204508 / S288c) (Baker's yeast).